The primary structure comprises 972 residues: Microtubule-associated protein 1S (972 aa).

The necessary for the microtubule-organizing center localization stretch occupies residues Met1–Ser715. A compositionally biased stretch (polar residues) spans Leu454 to Arg469. A disordered region spans residues Leu454–Leu632. A Phosphoserine modification is found at Ser462. The span at Val489–Lys505 shows a compositional bias: basic and acidic residues. Pro residues-rich tracts occupy residues Ala537–Glu550 and Pro564–Ala581. Phosphoserine occurs at positions 585, 590, and 592. The necessary for interaction with RASSF1 stretch occupies residues Pro600–Phe972. A compositionally biased stretch (low complexity) spans Ala602–Leu620. A necessary for association with microtubules region spans residues Asp644–Asn879. 2 positions are modified to phosphoserine: Ser659 and Ser683. The disordered stretch occupies residues Cys671 to Pro854. A compositionally biased stretch (low complexity) spans Pro702–Ala721. Ser723 carries the post-translational modification Phosphoserine. The span at Leu737–Asp748 shows a compositional bias: pro residues. A compositionally biased stretch (low complexity) spans Ala781 to Lys800. The interval Gly874–Phe972 is necessary for association with actin. A necessary for the mitochondrial aggregation and genome destruction region spans residues Phe880 to Gly904.

It belongs to the MAP1A/MAP1B/MAP1S family. In terms of assembly, heterodimer of a heavy and a light chain. Interacts with microtubules and actin. Both MAP1S heavy and light chains interact with microtubules. MAP1S light chain interacts with actin. Interacts with LRPPRC, RASSF1, microtubules and VCY2. Interacts (via C-terminus) with GAN (via Kelch domains). Interacts with WDR47 (via N-terminus of light chain). Interacts with ESR1. Expressed in cortex cerebellum, dorsal root ganglia, frontal cortex, hippocampus, hypothalamus, mesencephalon, medulla oblongata, occipital cortex, pons, spinal cord, striatum of the brain, neurons, heart, testis and skeletal muscle (at protein level).

Its subcellular location is the nucleus. The protein resides in the cytoplasm. It is found in the cytosol. It localises to the cytoskeleton. The protein localises to the spindle. Microtubule-associated protein that mediates aggregation of mitochondria resulting in cell death and genomic destruction (MAGD). Plays a role in anchoring the microtubule organizing center to the centrosomes. Binds to DNA. Plays a role in apoptosis. Involved in the formation of microtubule bundles. This is Microtubule-associated protein 1S (Map1s) from Rattus norvegicus (Rat).